The primary structure comprises 560 residues: General negative regulator of transcription subunit 5 (560 aa).

Coiled-coil stretches lie at residues 3–26 (QRKL…DFDD), 37–71 (SNSS…SKED), and 124–177 (KRDQ…NEMD). The tract at residues 212-330 (CEIQPSSSNN…DSEQQLNFPP (119 aa)) is disordered. Residues 215-237 (QPSSSNNEAPKEGNNQTSLSSIR) show a composition bias toward polar residues. The segment covering 273-288 (SQSISSTPTPVSTDTP) has biased composition (low complexity). The segment covering 299–311 (FDNSTLGTPTTHV) has biased composition (polar residues). At threonine 306 the chain carries Phosphothreonine. Lysine 338 participates in a covalent cross-link: Glycyl lysine isopeptide (Lys-Gly) (interchain with G-Cter in ubiquitin). Serine 377 carries the phosphoserine modification.

It belongs to the CNOT2/3/5 family. As to quaternary structure, forms a NOT protein complex that comprises NOT1, NOT2, NOT3, NOT4 and NOT5. Subunit of the 1.0 MDa CCR4-NOT core complex that contains CCR4, CAF1, NOT1, NOT2, NOT3, NOT4, NOT5, CAF40 and CAF130. In the complex interacts with NOT1 and NOT2. The core complex probably is part of a less characterized 1.9 MDa CCR4-NOT complex.

The protein resides in the cytoplasm. Its subcellular location is the nucleus. Functionally, acts as a component of the CCR4-NOT core complex, which in the nucleus seems to be a general transcription factor, and in the cytoplasm the major mRNA deadenylase involved in mRNA turnover. The NOT protein subcomplex negatively regulates the basal and activated transcription of many genes. Preferentially affects TC-type TATA element-dependent transcription. Could directly or indirectly inhibit component(s) of the general transcription machinery. This chain is General negative regulator of transcription subunit 5 (NOT5), found in Saccharomyces cerevisiae (strain ATCC 204508 / S288c) (Baker's yeast).